The chain runs to 115 residues: Large ribosomal subunit protein P1 (115 aa).

Over residues 56-73 (QAAAAPVPASGGAAAPAE) the composition is skewed to low complexity. The tract at residues 56 to 115 (QAAAAPVPASGGAAAPAEGDADEADEADEEAEEEAADDGGDDDDDEDDEASGEGLGELFG) is disordered. Residues 74–106 (GDADEADEADEEAEEEAADDGGDDDDDEDDEAS) show a composition bias toward acidic residues.

It belongs to the eukaryotic ribosomal protein P1/P2 family. In terms of assembly, part of the 50S ribosomal subunit. Homodimer, it forms part of the ribosomal stalk which helps the ribosome interact with GTP-bound translation factors. Forms a heptameric uL10/P0(P1)2(P1)2(P1)2 complex, where uL10/P0 forms an elongated spine to which the P1 dimers bind in a sequential fashion.

Functionally, forms part of the ribosomal stalk, playing a central role in the interaction of the ribosome with GTP-bound translation factors. The protein is Large ribosomal subunit protein P1 of Haloarcula marismortui (strain ATCC 43049 / DSM 3752 / JCM 8966 / VKM B-1809) (Halobacterium marismortui).